A 131-amino-acid polypeptide reads, in one-letter code: Large ribosomal subunit protein bL19 (131 aa).

This sequence belongs to the bacterial ribosomal protein bL19 family.

In terms of biological role, this protein is located at the 30S-50S ribosomal subunit interface and may play a role in the structure and function of the aminoacyl-tRNA binding site. In Rhodopseudomonas palustris (strain BisA53), this protein is Large ribosomal subunit protein bL19.